A 607-amino-acid polypeptide reads, in one-letter code: UvrABC system protein C (607 aa).

Residues 16 to 94 (GRPGVYRMFD…IKEWRPPYNI (79 aa)) form the GIY-YIG domain. The region spanning 203-238 (NALTDELSGAMEQAASTLDFERAAELRDQISLLRRV) is the UVR domain.

It belongs to the UvrC family. In terms of assembly, interacts with UvrB in an incision complex.

The protein resides in the cytoplasm. Functionally, the UvrABC repair system catalyzes the recognition and processing of DNA lesions. UvrC both incises the 5' and 3' sides of the lesion. The N-terminal half is responsible for the 3' incision and the C-terminal half is responsible for the 5' incision. The polypeptide is UvrABC system protein C (Pseudomonas fluorescens (strain SBW25)).